A 247-amino-acid polypeptide reads, in one-letter code: 1-(5-phosphoribosyl)-5-[(5-phosphoribosylamino)methylideneamino] imidazole-4-carboxamide isomerase (247 aa).

D8 functions as the Proton acceptor in the catalytic mechanism. D131 (proton donor) is an active-site residue.

Belongs to the HisA/HisF family.

The protein localises to the cytoplasm. The catalysed reaction is 1-(5-phospho-beta-D-ribosyl)-5-[(5-phospho-beta-D-ribosylamino)methylideneamino]imidazole-4-carboxamide = 5-[(5-phospho-1-deoxy-D-ribulos-1-ylimino)methylamino]-1-(5-phospho-beta-D-ribosyl)imidazole-4-carboxamide. It functions in the pathway amino-acid biosynthesis; L-histidine biosynthesis; L-histidine from 5-phospho-alpha-D-ribose 1-diphosphate: step 4/9. This Cupriavidus metallidurans (strain ATCC 43123 / DSM 2839 / NBRC 102507 / CH34) (Ralstonia metallidurans) protein is 1-(5-phosphoribosyl)-5-[(5-phosphoribosylamino)methylideneamino] imidazole-4-carboxamide isomerase.